A 235-amino-acid chain; its full sequence is Mediator of RNA polymerase II transcription subunit 29 (235 aa).

Residues 1–14 (MMNQMGMMMQQQGV) show a composition bias toward low complexity. A disordered region spans residues 1–54 (MMNQMGMMMQQQGVGVPGGPGGVGGVGMPGPGGVGVAPGMMQSPQMQQAQQQQV). Positions 15–36 (GVPGGPGGVGGVGMPGPGGVGV) are enriched in gly residues. Over residues 37–54 (APGMMQSPQMQQAQQQQV) the composition is skewed to low complexity.

The protein belongs to the Mediator complex subunit 29 family. Component of the Mediator complex.

Its subcellular location is the nucleus. Functionally, component of the Mediator complex, a coactivator involved in the regulated transcription of nearly all RNA polymerase II-dependent genes. Mediator functions as a bridge to convey information from gene-specific regulatory proteins to the basal RNA polymerase II transcription machinery. Mediator is recruited to promoters by direct interactions with regulatory proteins and serves as a scaffold for the assembly of a functional preinitiation complex with RNA polymerase II and the general transcription factors. This chain is Mediator of RNA polymerase II transcription subunit 29 (ix), found in Anopheles gambiae (African malaria mosquito).